Reading from the N-terminus, the 144-residue chain is UPF0225 protein RSc0270 (144 aa).

It belongs to the UPF0225 family.

This Ralstonia nicotianae (strain ATCC BAA-1114 / GMI1000) (Ralstonia solanacearum) protein is UPF0225 protein RSc0270.